Reading from the N-terminus, the 86-residue chain is Myosuppressin (86 aa).

Positions 1 to 18 (MAIFCNNVLAALPTQCNP) are cleaved as a signal peptide. A propeptide spanning residues 19–70 (GFLDDLPPRIRKVCVALSRIYELGSEMESYIGDKENHITGFHESIPLLDSGV) is cleaved from the precursor. Q73 carries the pyrrolidone carboxylic acid modification. F82 carries the post-translational modification Phenylalanine amide.

It localises to the secreted. Myoinhibiting neuropeptide. This Apis mellifera (Honeybee) protein is Myosuppressin.